We begin with the raw amino-acid sequence, 131 residues long: Peptide methionine sulfoxide reductase MsrB (131 aa).

The MsrB domain occupies 8-130; that stretch reads LEEWRAMLDP…NSVCLDLKPR (123 aa). Cys47, Cys50, Cys96, and Cys99 together coordinate Zn(2+). The active-site Nucleophile is the Cys119.

The protein belongs to the MsrB Met sulfoxide reductase family. Zn(2+) serves as cofactor.

It carries out the reaction L-methionyl-[protein] + [thioredoxin]-disulfide + H2O = L-methionyl-(R)-S-oxide-[protein] + [thioredoxin]-dithiol. The protein is Peptide methionine sulfoxide reductase MsrB of Pseudomonas entomophila (strain L48).